The chain runs to 197 residues: Recombination protein RecR (197 aa).

The C4-type zinc finger occupies 56–71; that stretch reads CRLCNNFSEAEVCEVC. Residues 79–174 enclose the Toprim domain; sequence RQLAVVEMPA…KVSRLARGVP (96 aa).

It belongs to the RecR family.

Functionally, may play a role in DNA repair. It seems to be involved in an RecBC-independent recombinational process of DNA repair. It may act with RecF and RecO. This chain is Recombination protein RecR, found in Thiobacillus denitrificans (strain ATCC 25259 / T1).